We begin with the raw amino-acid sequence, 79 residues long: Sec-independent protein translocase protein TatA (79 aa).

The chain crosses the membrane as a helical span at residues 1 to 21; sequence MGGISIWQLLIVALIVVLLFG. The interval 43-79 is disordered; that stretch reads MSSEEDKKALEDTEAAKTAQTTQQATEKKPESNKEQA. A compositionally biased stretch (basic and acidic residues) spans 46 to 57; the sequence is EEDKKALEDTEA. The span at 58–67 shows a compositional bias: low complexity; sequence AKTAQTTQQA. Residues 68–79 show a composition bias toward basic and acidic residues; that stretch reads TEKKPESNKEQA.

Belongs to the TatA/E family. In terms of assembly, the Tat system comprises two distinct complexes: a TatABC complex, containing multiple copies of TatA, TatB and TatC subunits, and a separate TatA complex, containing only TatA subunits. Substrates initially bind to the TatABC complex, which probably triggers association of the separate TatA complex to form the active translocon.

It is found in the cell inner membrane. In terms of biological role, part of the twin-arginine translocation (Tat) system that transports large folded proteins containing a characteristic twin-arginine motif in their signal peptide across membranes. TatA could form the protein-conducting channel of the Tat system. This chain is Sec-independent protein translocase protein TatA, found in Shewanella baltica (strain OS223).